The following is a 341-amino-acid chain: Phenylalanine--tRNA ligase alpha subunit (341 aa).

Residue glutamate 255 participates in Mg(2+) binding.

Belongs to the class-II aminoacyl-tRNA synthetase family. Phe-tRNA synthetase alpha subunit type 1 subfamily. As to quaternary structure, tetramer of two alpha and two beta subunits. Mg(2+) is required as a cofactor.

Its subcellular location is the cytoplasm. It catalyses the reaction tRNA(Phe) + L-phenylalanine + ATP = L-phenylalanyl-tRNA(Phe) + AMP + diphosphate + H(+). The sequence is that of Phenylalanine--tRNA ligase alpha subunit from Natranaerobius thermophilus (strain ATCC BAA-1301 / DSM 18059 / JW/NM-WN-LF).